The chain runs to 38 residues: Photosystem II reaction center protein X (38 aa).

Residues 9–29 (IASLTAGALVLSAIGIALIII) traverse the membrane as a helical segment.

The protein belongs to the PsbX family. Type 1 subfamily. As to quaternary structure, PSII is composed of 1 copy each of membrane proteins PsbA, PsbB, PsbC, PsbD, PsbE, PsbF, PsbH, PsbI, PsbJ, PsbK, PsbL, PsbM, PsbT, PsbX, PsbY, PsbZ, Psb30/Ycf12, at least 3 peripheral proteins of the oxygen-evolving complex and a large number of cofactors. It forms dimeric complexes.

The protein localises to the plastid. It localises to the chloroplast thylakoid membrane. Its function is as follows. Involved in the binding and/or turnover of quinones at the Q(B) site of photosystem II (PSII). PSII is a light-driven water plastoquinone oxidoreductase, using light energy to abstract electrons from H(2)O, generating a proton gradient subsequently used for ATP formation. The sequence is that of Photosystem II reaction center protein X from Thalassiosira pseudonana (Marine diatom).